The following is a 361-amino-acid chain: Chorismate synthase (361 aa).

2 residues coordinate NADP(+): arginine 48 and arginine 54. Residues 125–127 (RSS), 238–239 (NA), glycine 278, 293–297 (KPTSS), and arginine 319 contribute to the FMN site.

The protein belongs to the chorismate synthase family. Homotetramer. FMNH2 is required as a cofactor.

It catalyses the reaction 5-O-(1-carboxyvinyl)-3-phosphoshikimate = chorismate + phosphate. It functions in the pathway metabolic intermediate biosynthesis; chorismate biosynthesis; chorismate from D-erythrose 4-phosphate and phosphoenolpyruvate: step 7/7. In terms of biological role, catalyzes the anti-1,4-elimination of the C-3 phosphate and the C-6 proR hydrogen from 5-enolpyruvylshikimate-3-phosphate (EPSP) to yield chorismate, which is the branch point compound that serves as the starting substrate for the three terminal pathways of aromatic amino acid biosynthesis. This reaction introduces a second double bond into the aromatic ring system. The polypeptide is Chorismate synthase (Yersinia enterocolitica serotype O:8 / biotype 1B (strain NCTC 13174 / 8081)).